A 245-amino-acid polypeptide reads, in one-letter code: Flavin mononucleotide hydrolase 1, chloroplatic (245 aa).

The transit peptide at Met-1–Arg-26 directs the protein to the chloroplast.

Belongs to the HAD-like hydrolase superfamily. DOG/GPP family. As to quaternary structure, homodimer. Mg(2+) serves as cofactor.

The protein resides in the plastid. It is found in the chloroplast stroma. It carries out the reaction FMN + H2O = riboflavin + phosphate. It catalyses the reaction 5-amino-6-(5-phospho-D-ribitylamino)uracil + H2O = 5-amino-6-(D-ribitylamino)uracil + phosphate. Its function is as follows. FMN hydrolase that catalyzes the dephosphorylation of flavin mononucleotide (FMN) to riboflavin. Can also dephosphorylate 5-amino-6-(5-phospho-D-ribitylamino)uracil, also known as ARPP. Not required for riboflavin biosynthesis in planta, but may help maintaining flavin homeostasis within chloroplasts. In Arabidopsis thaliana (Mouse-ear cress), this protein is Flavin mononucleotide hydrolase 1, chloroplatic.